A 198-amino-acid chain; its full sequence is LexA repressor (198 aa).

The H-T-H motif DNA-binding region spans 28–47; it reads IRDIAKHFKLTPRGAHIHVL. Residues Ser120 and Lys157 each act as for autocatalytic cleavage activity in the active site.

Belongs to the peptidase S24 family. As to quaternary structure, homodimer.

The enzyme catalyses Hydrolysis of Ala-|-Gly bond in repressor LexA.. Its function is as follows. Represses a number of genes involved in the response to DNA damage (SOS response), including recA and lexA. In the presence of single-stranded DNA, RecA interacts with LexA causing an autocatalytic cleavage which disrupts the DNA-binding part of LexA, leading to derepression of the SOS regulon and eventually DNA repair. The chain is LexA repressor from Thermosipho africanus (strain TCF52B).